The chain runs to 128 residues: NADPH-dependent 7-cyano-7-deazaguanine reductase (128 aa).

The active-site Thioimide intermediate is Cys39. Asp46 functions as the Proton donor in the catalytic mechanism. Substrate contacts are provided by residues 61–63 and 80–81; these read IEL and HE.

This sequence belongs to the GTP cyclohydrolase I family. QueF type 1 subfamily.

Its subcellular location is the cytoplasm. The enzyme catalyses 7-aminomethyl-7-carbaguanine + 2 NADP(+) = 7-cyano-7-deazaguanine + 2 NADPH + 3 H(+). It functions in the pathway tRNA modification; tRNA-queuosine biosynthesis. Functionally, catalyzes the NADPH-dependent reduction of 7-cyano-7-deazaguanine (preQ0) to 7-aminomethyl-7-deazaguanine (preQ1). The protein is NADPH-dependent 7-cyano-7-deazaguanine reductase of Magnetococcus marinus (strain ATCC BAA-1437 / JCM 17883 / MC-1).